Consider the following 299-residue polypeptide: Plant-type L-asparaginase (299 aa).

Residue Thr-169 is the Nucleophile of the active site. Substrate contacts are provided by residues 197 to 200 and 220 to 223; these read RVGD and TGVG.

It belongs to the Ntn-hydrolase family. Heterotetramer of two alpha and two beta chains arranged as a dimer of alpha/beta heterodimers. The uncleaved protein forms homodimers. Post-translationally, autocleaved. Generates the alpha and beta subunits. The N-terminal residue of the beta subunit is thought to be responsible for the nucleophile hydrolase activity.

It carries out the reaction L-asparagine + H2O = L-aspartate + NH4(+). With respect to regulation, divalent metal ions and EDTA do not have significant effect on enzyme activity, indicating that activity is metal-independent. Functionally, catalyzes the hydrolysis of L-asparagine into L-aspartate and ammonia. Also displays D-asparaginase activity, which is about 20% of the L-asparaginase activity. Does not exhibit glutaminase activity. This chain is Plant-type L-asparaginase, found in Pyrobaculum calidifontis (strain DSM 21063 / JCM 11548 / VA1).